We begin with the raw amino-acid sequence, 642 residues long: Extracellular metalloproteinase 5 (642 aa).

The signal sequence occupies residues 1-19; the sequence is MHGLLLAAGLLSLPLHVLA. A propeptide spanning residues 20 to 246 is cleaved from the precursor; it reads HPQPSTTTSL…VHNVVDYVAH (227 aa). The N-linked (GlcNAc...) asparagine glycan is linked to Asn-287. Residue His-430 participates in Zn(2+) binding. Glu-431 is a catalytic residue. Residue His-434 participates in Zn(2+) binding. Asn-595 and Asn-624 each carry an N-linked (GlcNAc...) asparagine glycan.

Belongs to the peptidase M36 family. Requires Zn(2+) as cofactor.

The protein localises to the secreted. Secreted metalloproteinase that allows assimilation of proteinaceous substrates and probably acts as a virulence factor. The protein is Extracellular metalloproteinase 5 (MEP5) of Arthroderma gypseum (strain ATCC MYA-4604 / CBS 118893) (Microsporum gypseum).